A 539-amino-acid chain; its full sequence is Netrin-G1 (539 aa).

A signal peptide spans 1–28; it reads MYLSRFLSIHALWVTVSSVMQPYPLVWG. Cystine bridges form between Cys-33-Cys-50, Cys-72-Cys-92, and Cys-80-Cys-88. Positions 46–296 constitute a Laminin N-terminal domain; the sequence is DYMACQPEST…AISDIKVRGR (251 aa). The NGL discriminant loop I stretch occupies residues 80 to 91; sequence CAMGNPYMCNNE. A glycan (N-linked (GlcNAc...) asparagine) is linked at Asn-133. Cys-182 and Cys-206 are joined by a disulfide. The NGL discriminant loop II stretch occupies residues 208 to 214; that stretch reads EEYSTGY. An NGL discriminant loop III region spans residues 273 to 275; sequence EIF. Intrachain disulfides connect Cys-297-Cys-306, Cys-299-Cys-315, Cys-317-Cys-326, Cys-329-Cys-354, Cys-364-Cys-373, Cys-366-Cys-384, Cys-387-Cys-396, Cys-399-Cys-417, Cys-420-Cys-432, Cys-422-Cys-438, Cys-440-Cys-449, Cys-452-Cys-462, Cys-467-Cys-480, Cys-474-Cys-486, and Cys-488-Cys-497. Laminin EGF-like domains follow at residues 297–356, 364–419, and 420–469; these read CKCN…TCIP, CECF…VCIE, and CYCN…VCDN. N-linked (GlcNAc...) asparagine glycosylation is present at Asn-320. An N-linked (GlcNAc...) asparagine glycan is attached at Asn-406. A glycan (N-linked (GlcNAc...) asparagine) is linked at Asn-433. Residue Ser-510 is the site of GPI-anchor amidated serine attachment. A propeptide spans 511–539 (removed in mature form); the sequence is DSGQGAPPHGSPALLLLTTLLGTASPLVF.

In terms of assembly, interacts with NGL1. Post-translationally, N-glycosylated. In terms of tissue distribution, highly expressed in the thalamus, with very low expression, if any, in other tissues.

It localises to the cell membrane. Functionally, involved in controlling patterning and neuronal circuit formation at the laminar, cellular, subcellular and synaptic levels. Promotes neurite outgrowth of both axons and dendrites. This is Netrin-G1 (NTNG1) from Homo sapiens (Human).